Reading from the N-terminus, the 194-residue chain is Potassium-transporting ATPase KdpC subunit (194 aa).

Residues Leu-12–Phe-34 traverse the membrane as a helical segment.

The protein belongs to the KdpC family. The system is composed of three essential subunits: KdpA, KdpB and KdpC.

It localises to the cell inner membrane. Part of the high-affinity ATP-driven potassium transport (or Kdp) system, which catalyzes the hydrolysis of ATP coupled with the electrogenic transport of potassium into the cytoplasm. This subunit acts as a catalytic chaperone that increases the ATP-binding affinity of the ATP-hydrolyzing subunit KdpB by the formation of a transient KdpB/KdpC/ATP ternary complex. This chain is Potassium-transporting ATPase KdpC subunit, found in Salmonella enteritidis PT4 (strain P125109).